The sequence spans 396 residues: (S)-8-oxocitronellyl enol synthase ISY2 (396 aa).

Residues 38 to 40 (TGL), 66 to 67 (RR), 84 to 85 (DV), 108 to 109 (TW), Gln146, Tyr182, Ile209, and 216 to 218 (SMM) contribute to the NADP(+) site. The active site involves Tyr182.

It belongs to the short-chain dehydrogenases/reductases (SDR) family.

It catalyses the reaction (S)-8-oxocitronellyl enol + NADP(+) = (6E)-8-oxogeranial + NADPH + H(+). It carries out the reaction (S)-8-oxocitronellyl enol + NAD(+) = (6E)-8-oxogeranial + NADH + H(+). Functionally, iridoid synthase that catalyzes the first step in generation of the iridoid ring scaffold using the linear monoterpene (6E)-8-oxogeranial as substrate. Iridoids comprise a large family of distinctive bicyclic monoterpenes that possess a wide range of pharmacological activities, including anticancer, anti-inflammatory, antifungal and antibacterial activities. Catalyzes the conversion of the linear monoterpene (6E)-8-oxogeranial to (S)-8-oxocitronellyl enol, a precursor of nepetalactones, which are metabolites that are both insect-repellent and have euphoric effect in cats. This chain is (S)-8-oxocitronellyl enol synthase ISY2, found in Nepeta racemosa (Catmint).